A 501-amino-acid polypeptide reads, in one-letter code: Acetylcholine receptor subunit beta (501 aa).

Residues 1-23 (MALGALLLILGILGTPLAPGARG) form the signal peptide. Residues 24-244 (SEAEGQLLKK…VIFYLIIRRK (221 aa)) are Extracellular-facing. An intrachain disulfide couples Cys151 to Cys165. N-linked (GlcNAc...) asparagine glycosylation occurs at Asn164. 3 helical membrane passes run 245-269 (PLFY…VFYL), 277-295 (MGLS…LLLA), and 311-332 (YLMF…VLNL). Over 333–469 (HHRSPHTHQM…WQFVAMVVDR (137 aa)) the chain is Cytoplasmic. The segment at 362–381 (RPKPERDQLPEPHHSFSPRS) is disordered. A compositionally biased stretch (basic and acidic residues) spans 363–375 (PKPERDQLPEPHH). Residue Tyr390 is modified to Phosphotyrosine; by Tyr-kinases. A helical transmembrane segment spans residues 470–488 (LFLWTFIVFTSVGTLVIFL).

The protein belongs to the ligand-gated ion channel (TC 1.A.9) family. Acetylcholine receptor (TC 1.A.9.1) subfamily. Beta-1/CHRNB1 sub-subfamily. In terms of assembly, pentamer of two alpha chains, and one each of the beta, delta, and gamma (in immature muscle) or epsilon (in mature muscle) chains. The muscle heteropentamer composed of alpha-1, beta-1, delta, epsilon subunits interacts with the alpha-conotoxin ImII.

The protein resides in the postsynaptic cell membrane. It localises to the cell membrane. It carries out the reaction K(+)(in) = K(+)(out). The catalysed reaction is Na(+)(in) = Na(+)(out). Functionally, after binding acetylcholine, the AChR responds by an extensive change in conformation that affects all subunits and leads to opening of an ion-conducting channel across the plasma membrane. This Rattus norvegicus (Rat) protein is Acetylcholine receptor subunit beta (Chrnb1).